We begin with the raw amino-acid sequence, 241 residues long: ATP synthase subunit a (241 aa).

Helical transmembrane passes span 30 to 50, 91 to 111, 128 to 148, 193 to 213, and 214 to 234; these read GQVF…ISFG, FIGT…LIPW, INTT…AGLS, LVVG…VMFL, and GLFT…YYIG.

This sequence belongs to the ATPase A chain family. F-type ATPases have 2 components, CF(1) - the catalytic core - and CF(0) - the membrane proton channel. CF(1) has five subunits: alpha(3), beta(3), gamma(1), delta(1), epsilon(1). CF(0) has four main subunits: a, b, b' and c.

Its subcellular location is the cellular thylakoid membrane. Key component of the proton channel; it plays a direct role in the translocation of protons across the membrane. In Prochlorococcus marinus (strain AS9601), this protein is ATP synthase subunit a.